The chain runs to 141 residues: Zinc finger HIT domain-containing protein 3 (141 aa).

An HIT-type; degenerate zinc finger spans residues 1–28 (LEKPKYRCPACRVPYCSVACFRKHKEQC). Residues C8, C11, H24, and C28 each coordinate Zn(2+). Phosphoserine is present on S66.

In terms of assembly, thyroid receptor interacting proteins (TRIPs) specifically interact with the ligand binding domain of the thyroid receptor (TR). Requires the presence of thyroid hormone for its interaction. Interacts with NUFIP1. Interacts (via HIT-type zinc finger) with the RUVBL1/RUVBL2 complex in the presence of ADP.

Its subcellular location is the cytoplasm. It localises to the nucleus. In Pan troglodytes (Chimpanzee), this protein is Zinc finger HIT domain-containing protein 3 (ZNHIT3).